A 416-amino-acid chain; its full sequence is 26S proteasome regulatory subunit 8 (416 aa).

Positions 1–18 (MAPPASTASSADPSKPTA) are enriched in low complexity. The segment at 1 to 29 (MAPPASTASSADPSKPTAQKLTEESDEKT) is disordered. 200–207 (GPPGTGKT) lines the ATP pocket.

This sequence belongs to the AAA ATPase family. Component of the 19S proteasome regulatory particle complex. The 26S proteasome consists of a 20S core particle (CP) and two 19S regulatory subunits (RP). Interacts with elt-2.

It localises to the cytoplasm. The protein resides in the nucleus. Functionally, component of the 26S proteasome, a multiprotein complex involved in the ATP-dependent degradation of ubiquitinated proteins. This complex plays a key role in the maintenance of protein homeostasis by removing misfolded or damaged proteins, which could impair cellular functions, and by removing proteins whose functions are no longer required. Therefore, the proteasome participates in numerous cellular processes, including cell cycle progression, apoptosis, or DNA damage repair. Belongs to the heterohexameric ring of AAA (ATPases associated with diverse cellular activities) proteins that unfolds ubiquitinated target proteins that are concurrently translocated into a proteolytic chamber and degraded into peptides. In addition, regulates gene expression in response to bacterial infection. Binds to the GATA transcription factor elt-2 to control its transcriptional activity and thus the expression of elt-2-dependent genes in response to infection by Gram-negative bacteria such as P.aeruginosa. The chain is 26S proteasome regulatory subunit 8 from Caenorhabditis elegans.